Here is a 479-residue protein sequence, read N- to C-terminus: Adenosylhomocysteinase (479 aa).

Substrate-binding residues include Thr65, Asp144, and Glu204. Thr205–Thr207 lines the NAD(+) pocket. Residues Lys234 and Asp238 each coordinate substrate. NAD(+)-binding positions include Asn239, Gly268–Gly273, Glu291, Asn326, Ile347–His349, and Asn392.

Belongs to the adenosylhomocysteinase family. NAD(+) serves as cofactor.

The protein resides in the cytoplasm. It carries out the reaction S-adenosyl-L-homocysteine + H2O = L-homocysteine + adenosine. It functions in the pathway amino-acid biosynthesis; L-homocysteine biosynthesis; L-homocysteine from S-adenosyl-L-homocysteine: step 1/1. May play a key role in the regulation of the intracellular concentration of adenosylhomocysteine. The chain is Adenosylhomocysteinase from Variovorax paradoxus (strain S110).